The chain runs to 323 residues: Aldo-keto reductase family 1 member C3 (323 aa).

Residues 23 to 24 and Asp-50 contribute to the NADP(+) site; that span reads TY. Residue Tyr-55 is the Proton donor of the active site. His-117 contacts substrate. NADP(+)-binding positions include 166 to 167, Gln-190, 216 to 222, 270 to 272, and 276 to 280; these read SN, YSALGSQ, KSY, and RIRQN.

The protein belongs to the aldo/keto reductase family. Expressed in many tissues including adrenal gland, brain, kidney, liver, lung, mammary gland, placenta, small intestine, colon, spleen, prostate and testis. High expression in prostate and mammary gland. In the prostate, higher levels in epithelial cells than in stromal cells. In the brain, expressed in medulla, spinal cord, frontotemporal lobes, thalamus, subthalamic nuclei and amygdala. Weaker expression in the hippocampus, substantia nigra and caudate.

It localises to the cytoplasm. The enzyme catalyses a 3alpha-hydroxysteroid + NADP(+) = a 3-oxosteroid + NADPH + H(+). The catalysed reaction is a 3alpha-hydroxysteroid + NAD(+) = a 3-oxosteroid + NADH + H(+). It carries out the reaction prostaglandin F2alpha + NADP(+) = prostaglandin D2 + NADPH + H(+). It catalyses the reaction prostaglandin F2alpha + NADP(+) = prostaglandin H2 + NADPH + H(+). The enzyme catalyses prostaglandin D2 + NADPH + H(+) = 11beta-prostaglandin F2 + NADP(+). The catalysed reaction is prostaglandin D2-ethanolamide + NADPH + H(+) = 11beta-prostaglandin F2-ethanolamide + NADP(+). It carries out the reaction testosterone + NAD(+) = androst-4-ene-3,17-dione + NADH + H(+). It catalyses the reaction testosterone + NADP(+) = androst-4-ene-3,17-dione + NADPH + H(+). The enzyme catalyses 17beta-estradiol + NADP(+) = estrone + NADPH + H(+). The catalysed reaction is 17beta-estradiol + NAD(+) = estrone + NADH + H(+). It carries out the reaction (20S)-hydroxypregn-4-en-3-one + NADP(+) = progesterone + NADPH + H(+). It catalyses the reaction (20S)-hydroxypregn-4-en-3-one + NAD(+) = progesterone + NADH + H(+). The enzyme catalyses 5alpha-androstane-3alpha,17beta-diol + NADP(+) = 17beta-hydroxy-5alpha-androstan-3-one + NADPH + H(+). The catalysed reaction is 5alpha-androstane-3alpha,17beta-diol + NAD(+) = 17beta-hydroxy-5alpha-androstan-3-one + NADH + H(+). It carries out the reaction androsterone + NADPH + H(+) = 5alpha-androstane-3alpha,17beta-diol + NADP(+). It catalyses the reaction 5alpha-androstane-3alpha,17beta-diol + NAD(+) = androsterone + NADH + H(+). The enzyme catalyses 5alpha-androstane-3beta,17beta-diol + NADP(+) = 17beta-hydroxy-5alpha-androstan-3-one + NADPH + H(+). The catalysed reaction is 9-cis-retinol + NADP(+) = 9-cis-retinal + NADPH + H(+). It functions in the pathway steroid metabolism. With respect to regulation, strongly inhibited by nonsteroidal anti-inflammatory drugs (NSAID) including flufenamic acid and indomethacin. Also inhibited by the flavinoid, rutin, and by selective serotonin inhibitors (SSRIs). The oxidation reaction is inhibited by low micromolar concentrations of NADPH. Its function is as follows. Cytosolic aldo-keto reductase that catalyzes the NADH and NADPH-dependent reduction of ketosteroids to hydroxysteroids. Acts as a NAD(P)(H)-dependent 3-, 17- and 20-ketosteroid reductase on the steroid nucleus and side chain and regulates the metabolism of androgens, estrogens and progesterone. Displays the ability to catalyze both oxidation and reduction in vitro, but most probably acts as a reductase in vivo since the oxidase activity measured in vitro is inhibited by physiological concentration of NADPH. Acts preferentially as a 17-ketosteroid reductase and has the highest catalytic efficiency of the AKR1C enzyme for the reduction of delta4-androstenedione to form testosterone. Reduces prostaglandin (PG) D2 to 11beta-prostaglandin F2, progesterone to 20alpha-hydroxyprogesterone and estrone to 17beta-estradiol. Catalyzes the transformation of the potent androgen dihydrotestosterone (DHT) into the less active form, 5-alpha-androstan-3-alpha,17-beta-diol (3-alpha-diol). Also displays retinaldehyde reductase activity toward 9-cis-retinal. This Homo sapiens (Human) protein is Aldo-keto reductase family 1 member C3 (AKR1C3).